The following is a 503-amino-acid chain: Proton-coupled zinc antiporter SLC30A1 (503 aa).

The Cytoplasmic segment spans residues 1–10 (MGCWGRNRGR). Residues 11–31 (LLCMLLLTFMFMVLEVVVSRV) traverse the membrane as a helical segment. Residues 32-35 (TASL) lie on the Extracellular side of the membrane. Residues 36–56 (AMLSDSFHMLSDVLALVVALV) form a helical membrane-spanning segment. Positions 43 and 47 each coordinate Zn(2+). Residues 57–78 (AERFARRTHATQKNTFGWIRAE) are Cytoplasmic-facing. A helical membrane pass occupies residues 79–99 (VMGALVNAIFLTGLCFAILLE). At 100 to 113 (AVERFIEPHEMQQP) the chain is on the extracellular side. A helical transmembrane segment spans residues 114–134 (LVVLSVGVAGLLVNVLGLCLF). Residues 135-243 (HHHSGEGQGA…RAGQLNMRGV (109 aa)) lie on the Cytoplasmic side of the membrane. The tract at residues 140 to 213 (EGQGAGHGHS…PEKLRSDDPV (74 aa)) is disordered. The interval 145–156 (GHGHSHGHGHGH) is 6 X 2 AA approximate repeats of H-G. The segment covering 147–165 (GHSHGHGHGHLAKGARKAG) has biased composition (basic residues). A compositionally biased stretch (polar residues) spans 184–196 (TNTLVANTSNSNG). Positions 200–211 (DQAEPEKLRSDD) are enriched in basic and acidic residues. The chain crosses the membrane as a helical span at residues 244 to 264 (FLHVLGDALGSVIVVVNALVF). Positions 246 and 250 each coordinate Zn(2+). Residues 265–303 (YFNWKGCTEDDFCTNPCFPDPCKSSVEIINSTQAPMRDA) lie on the Extracellular side of the membrane. Asparagine 294 carries an N-linked (GlcNAc...) asparagine glycan. A helical transmembrane segment spans residues 304–324 (GPCWVLYLDPTLCIIMVCILL). The Cytoplasmic segment spans residues 325–503 (YTTYPLLKES…VPNKQPESSL (179 aa)). Serine 502 carries the post-translational modification Phosphoserine.

Belongs to the cation diffusion facilitator (CDF) transporter (TC 2.A.4) family. SLC30A subfamily. In terms of assembly, homodimer. Interacts with TMEM163. Interacts and forms a complex with TMC6 and TMC8; the interaction regulates zinc transport into the ER. In terms of tissue distribution, widely expressed.

The protein resides in the cell membrane. Its subcellular location is the basolateral cell membrane. It localises to the cytoplasmic vesicle membrane. The protein localises to the cytoplasm. It is found in the endoplasmic reticulum membrane. The protein resides in the golgi apparatus membrane. Its subcellular location is the nucleus membrane. The enzyme catalyses Zn(2+)(in) + 2 H(+)(out) = Zn(2+)(out) + 2 H(+)(in). Functionally, zinc ion:proton antiporter that could function at the plasma membrane mediating zinc efflux from cells against its electrochemical gradient protecting them from intracellular zinc accumulation and toxicity. Alternatively, could prevent the transport to the plasma membrane of CACNB2, the L-type calcium channels regulatory subunit, through a yet to be defined mechanism. By modulating the expression of these channels at the plasma membrane, could prevent calcium and zinc influx into cells. By the same mechanism, could also prevent L-type calcium channels-mediated heavy metal influx into cells. In some cells, could also function as a zinc ion:proton antiporter mediating zinc entry into the lumen of cytoplasmic vesicles. In macrophages, can increase zinc ions concentration into the lumen of cytoplasmic vesicles containing engulfed bacteria and could help inactivate them. Forms a complex with TMC6/EVER1 and TMC8/EVER2 at the ER membrane of keratynocytes which facilitates zinc uptake into the ER. Down-regulates the activity of transcription factors induced by zinc and cytokines. In Mus musculus (Mouse), this protein is Proton-coupled zinc antiporter SLC30A1.